We begin with the raw amino-acid sequence, 549 residues long: MKRVLTALAATLPFAANAADAISGAVERQPTNWQAIIMFLIFVVFTLGITYWASKRVRSRNDYYTAGGNITGFQNGLAIAGDYMSAASFLGISALVFTSGYDGLIYSLGFLVGWPIILFLIAERLRNLGRYTFADVASYRLKQGPIRILSACGSLVVVALYLIAQMVGAGKLIELLFGLNYHIAVVLVGVLMMMYVLFGGMLATTWVQIIKAVLLLFGASFMAFMVMKHVGFSFNNLFSEAMAVHPKGVDIMKPGGLVKDPISALSLGLGLMFGTAGLPHILMHFFTVSDAREARKSVFYATGFMGYFYILTFIIGFGAIMLVGANPEYKDAAGHLIGGNNMAAVHLANAVGGNLFLGFISAVAFATILAVVAGLTLAGASAVSHDLYANVFKKGATEREELRVSKITVLILGVIAIILGVLFENQNIAFMVGLAFAIAASCNFPIILLSMYWSKLTTRGAMLGGWLGLITAVVLMILGPTIWVQILGHEKAIFPYEYPALFSISVAFLGIWLFSATDNSAEGARERELFRAQFIRSQTGFGVEQGRAH.

At 1–32 (MKRVLTALAATLPFAANAADAISGAVERQPTN) the chain is on the periplasmic side. A helical membrane pass occupies residues 33 to 55 (WQAIIMFLIFVVFTLGITYWASK). The Cytoplasmic segment spans residues 56–75 (RVRSRNDYYTAGGNITGFQN). The chain crosses the membrane as a helical span at residues 76 to 98 (GLAIAGDYMSAASFLGISALVFT). Topologically, residues 99–102 (SGYD) are periplasmic. A helical transmembrane segment spans residues 103-125 (GLIYSLGFLVGWPIILFLIAERL). Over 126-145 (RNLGRYTFADVASYRLKQGP) the chain is Cytoplasmic. The chain crosses the membrane as a helical span at residues 146–168 (IRILSACGSLVVVALYLIAQMVG). Residues 169–182 (AGKLIELLFGLNYH) are Periplasmic-facing. Residues 183 to 205 (IAVVLVGVLMMMYVLFGGMLATT) form a helical membrane-spanning segment. The Cytoplasmic portion of the chain corresponds to 206–211 (WVQIIK). The chain crosses the membrane as a helical span at residues 212 to 234 (AVLLLFGASFMAFMVMKHVGFSF). Topologically, residues 235–263 (NNLFSEAMAVHPKGVDIMKPGGLVKDPIS) are periplasmic. Residues 264-286 (ALSLGLGLMFGTAGLPHILMHFF) traverse the membrane as a helical segment. At 287–297 (TVSDAREARKS) the chain is on the cytoplasmic side. A helical membrane pass occupies residues 298 to 320 (VFYATGFMGYFYILTFIIGFGAI). Topologically, residues 321–358 (MLVGANPEYKDAAGHLIGGNNMAAVHLANAVGGNLFLG) are periplasmic. Residues 359-381 (FISAVAFATILAVVAGLTLAGAS) form a helical membrane-spanning segment. Residues 382–401 (AVSHDLYANVFKKGATEREE) are Cytoplasmic-facing. The chain crosses the membrane as a helical span at residues 402 to 424 (LRVSKITVLILGVIAIILGVLFE). At 425–427 (NQN) the chain is on the periplasmic side. Residues 428–450 (IAFMVGLAFAIAASCNFPIILLS) form a helical membrane-spanning segment. The Cytoplasmic portion of the chain corresponds to 451–461 (MYWSKLTTRGA). A helical transmembrane segment spans residues 462-484 (MLGGWLGLITAVVLMILGPTIWV). The Periplasmic segment spans residues 485-493 (QILGHEKAI). Residues 494–516 (FPYEYPALFSISVAFLGIWLFSA) form a helical membrane-spanning segment. At 517–549 (TDNSAEGARERELFRAQFIRSQTGFGVEQGRAH) the chain is on the cytoplasmic side.

Belongs to the sodium:solute symporter (SSF) (TC 2.A.21) family.

The protein resides in the cell inner membrane. In terms of biological role, transports acetate. The sequence is that of Cation/acetate symporter ActP (actP) from Escherichia coli O6:H1 (strain CFT073 / ATCC 700928 / UPEC).